A 277-amino-acid polypeptide reads, in one-letter code: Pantothenate synthetase (277 aa).

An ATP-binding site is contributed by 26–33 (MGNLHAGH). The Proton donor role is filled by His-33. Gln-57 lines the (R)-pantoate pocket. Gln-57 is a binding site for beta-alanine. Position 143 to 146 (143 to 146 (GEKD)) interacts with ATP. Residue Gln-149 coordinates (R)-pantoate. ATP-binding positions include Val-172 and 180-183 (LSSR).

The protein belongs to the pantothenate synthetase family. Homodimer.

It is found in the cytoplasm. The enzyme catalyses (R)-pantoate + beta-alanine + ATP = (R)-pantothenate + AMP + diphosphate + H(+). The protein operates within cofactor biosynthesis; (R)-pantothenate biosynthesis; (R)-pantothenate from (R)-pantoate and beta-alanine: step 1/1. In terms of biological role, catalyzes the condensation of pantoate with beta-alanine in an ATP-dependent reaction via a pantoyl-adenylate intermediate. This chain is Pantothenate synthetase, found in Nitrosomonas europaea (strain ATCC 19718 / CIP 103999 / KCTC 2705 / NBRC 14298).